Reading from the N-terminus, the 161-residue chain is Nucleotide-binding protein RSc2549 (161 aa).

This sequence belongs to the YajQ family.

Nucleotide-binding protein. This chain is Nucleotide-binding protein RSc2549, found in Ralstonia nicotianae (strain ATCC BAA-1114 / GMI1000) (Ralstonia solanacearum).